Consider the following 452-residue polypeptide: Methionine aminopeptidase 2 (452 aa).

Positions methionine 1 to isoleucine 91 are disordered. Residues glutamate 8 to aspartate 38 show a composition bias toward basic and acidic residues. A compositionally biased stretch (acidic residues) spans valine 39–threonine 62. Residues lysine 74 to isoleucine 91 are compositionally biased toward basic residues. Residue histidine 203 coordinates substrate. A divalent metal cation contacts are provided by aspartate 223, aspartate 234, and histidine 305. Residue histidine 313 coordinates substrate. Glutamate 338 and glutamate 433 together coordinate a divalent metal cation.

Belongs to the peptidase M24A family. Methionine aminopeptidase eukaryotic type 2 subfamily. Requires Co(2+) as cofactor. The cofactor is Zn(2+). It depends on Mn(2+) as a cofactor. Fe(2+) is required as a cofactor.

It localises to the cytoplasm. The catalysed reaction is Release of N-terminal amino acids, preferentially methionine, from peptides and arylamides.. In terms of biological role, cotranslationally removes the N-terminal methionine from nascent proteins. The N-terminal methionine is often cleaved when the second residue in the primary sequence is small and uncharged (Met-Ala-, Cys, Gly, Pro, Ser, Thr, or Val). This Candida dubliniensis (strain CD36 / ATCC MYA-646 / CBS 7987 / NCPF 3949 / NRRL Y-17841) (Yeast) protein is Methionine aminopeptidase 2.